Consider the following 350-residue polypeptide: ADP-ribosylhydrolase ARH3 (350 aa).

Residues glutamate 27, threonine 57, aspartate 58, and aspartate 59 each contribute to the Mg(2+) site. Aspartate 58 is a binding site for substrate. Residues 127-133 (KGSYGNG), histidine 163, leucine 216, and isoleucine 252 contribute to the substrate site. Mg(2+)-binding residues include aspartate 295, aspartate 297, and threonine 298.

It belongs to the ADP-ribosylglycohydrolase family. In terms of assembly, monomer. Mg(2+) serves as cofactor.

Its subcellular location is the nucleus. It localises to the cytoplasm. The protein resides in the chromosome. The protein localises to the mitochondrion matrix. It catalyses the reaction [(1''-&gt;2')-ADP-alpha-D-ribose](n) + H2O = [(1''-&gt;2')-ADP-alpha-D-ribose](n-1) + ADP-D-ribose. The catalysed reaction is 1''-O-acetyl-ADP-alpha-D-ribose + H2O = ADP-D-ribose + acetate + H(+). It carries out the reaction O-(ADP-D-ribosyl)-L-seryl-[protein] + H2O = ADP-D-ribose + L-seryl-[protein]. The enzyme catalyses alpha-NAD(+) + H2O = ADP-D-ribose + nicotinamide + H(+). Its activity is regulated as follows. The protein undergoes a dramatic conformational switch from closed to open states upon substrate-binding, which enables specific substrate recognition for the 1''-O-linkage. The glutamate flap (Glu-27) blocks substrate entrance to Mg(2+) in the unliganded closed state. In presence of substrate, Glu-27 is ejected from the active site: this closed-to-open transition significantly widens the substrate-binding channel and precisely positions the scissile 1''-O-linkage for cleavage while securing tightly 2'- and 3'-hydroxyls of ADP-ribose. In terms of biological role, ADP-ribosylhydrolase that preferentially hydrolyzes the scissile alpha-O-linkage attached to the anomeric C1'' position of ADP-ribose and acts on different substrates, such as proteins ADP-ribosylated on serine and threonine, free poly(ADP-ribose) and O-acetyl-ADP-D-ribose. Specifically acts as a serine mono-ADP-ribosylhydrolase by mediating the removal of mono-ADP-ribose attached to serine residues on proteins, thereby playing a key role in DNA damage response. Serine ADP-ribosylation of proteins constitutes the primary form of ADP-ribosylation of proteins in response to DNA damage. Does not hydrolyze ADP-ribosyl-arginine, -cysteine, -diphthamide, or -asparagine bonds. Also able to degrade protein free poly(ADP-ribose), which is synthesized in response to DNA damage: free poly(ADP-ribose) acts as a potent cell death signal and its degradation by ADPRHL2 protects cells from poly(ADP-ribose)-dependent cell death, a process named parthanatos. Also hydrolyzes free poly(ADP-ribose) in mitochondria. Specifically digests O-acetyl-ADP-D-ribose, a product of deacetylation reactions catalyzed by sirtuins. Specifically degrades 1''-O-acetyl-ADP-D-ribose isomer, rather than 2''-O-acetyl-ADP-D-ribose or 3''-O-acetyl-ADP-D-ribose isomers. In Xenopus tropicalis (Western clawed frog), this protein is ADP-ribosylhydrolase ARH3 (adprs).